Consider the following 229-residue polypeptide: Histidine biosynthesis bifunctional protein HisIE (229 aa).

Residues 1-127 (MNTLLDGIDW…APDTSALYGV (127 aa)) form a phosphoribosyl-AMP cyclohydrolase region. Residues 128 to 229 (VDRLYHELLA…IAEKNSRKDS (102 aa)) are phosphoribosyl-ATP pyrophosphohydrolase.

The protein in the N-terminal section; belongs to the PRA-CH family. This sequence in the C-terminal section; belongs to the PRA-PH family.

The protein resides in the cytoplasm. It carries out the reaction 1-(5-phospho-beta-D-ribosyl)-ATP + H2O = 1-(5-phospho-beta-D-ribosyl)-5'-AMP + diphosphate + H(+). The enzyme catalyses 1-(5-phospho-beta-D-ribosyl)-5'-AMP + H2O = 1-(5-phospho-beta-D-ribosyl)-5-[(5-phospho-beta-D-ribosylamino)methylideneamino]imidazole-4-carboxamide. It functions in the pathway amino-acid biosynthesis; L-histidine biosynthesis; L-histidine from 5-phospho-alpha-D-ribose 1-diphosphate: step 2/9. It participates in amino-acid biosynthesis; L-histidine biosynthesis; L-histidine from 5-phospho-alpha-D-ribose 1-diphosphate: step 3/9. In Wolinella succinogenes (strain ATCC 29543 / DSM 1740 / CCUG 13145 / JCM 31913 / LMG 7466 / NCTC 11488 / FDC 602W) (Vibrio succinogenes), this protein is Histidine biosynthesis bifunctional protein HisIE.